We begin with the raw amino-acid sequence, 34 residues long: Peptide 9797 (34 aa).

Expressed by the venom gland.

It is found in the secreted. This Tityus stigmurus (Brazilian scorpion) protein is Peptide 9797.